A 393-amino-acid chain; its full sequence is Lipid-A-disaccharide synthase (393 aa).

Belongs to the LpxB family.

The catalysed reaction is a lipid X + a UDP-2-N,3-O-bis[(3R)-3-hydroxyacyl]-alpha-D-glucosamine = a lipid A disaccharide + UDP + H(+). It participates in bacterial outer membrane biogenesis; LPS lipid A biosynthesis. Functionally, condensation of UDP-2,3-diacylglucosamine and 2,3-diacylglucosamine-1-phosphate to form lipid A disaccharide, a precursor of lipid A, a phosphorylated glycolipid that anchors the lipopolysaccharide to the outer membrane of the cell. In Granulibacter bethesdensis (strain ATCC BAA-1260 / CGDNIH1), this protein is Lipid-A-disaccharide synthase.